The sequence spans 444 residues: F-box/FBD/LRR-repeat protein At5g53840 (444 aa).

The F-box domain maps to 17-63 (EERLSQLPDHLICVILSHLSTKDAVRTSILSTRWRNLWQLVPVLDFD). 11 LRR repeats span residues 103 to 123 (YYLTSWIDLVTRHRIQHIDIS), 124 to 150 (VFTCSGFGVIPLSLYTCDTLVHLKLSR), 151 to 171 (VTMVNVEFVSLPCLKILDLDF), 172 to 197 (VNFTNETTLDKIISCSPVLEELTIVK), 199 to 224 (SEDNVKIIQVRSQTLKRVEIHRRFDR), 226 to 252 (NGLVIDTPLLQFLSIKAHSIKSIEFIN), 273 to 299 (NRSMTRDFFTTISRVRSLVIRHGTIKD), 300 to 321 (IFHYMELEPLQQFCYLSELSAV), 322 to 347 (CSISNLEMLLNLLKSCPKLESLSLKL), 369 to 396 (VSSLKFVKLESQLLGCGTELKVARYFLE), and 398 to 423 (STILEKLTLKIDYMYKDEANVNHIRQ). An FBD domain is found at 356 to 408 (EEVMSSTVPPPCLVSSLKFVKLESQLLGCGTELKVARYFLENSTILEKLTLKI).

The polypeptide is F-box/FBD/LRR-repeat protein At5g53840 (Arabidopsis thaliana (Mouse-ear cress)).